The primary structure comprises 272 residues: Ribosome maturation factor RimP (272 aa).

The disordered stretch occupies residues 209-272 (QNLGILPPPP…RGDIDPPEGD (64 aa)). Residues 250-266 (NTKEHRLAAERLRRGDI) show a composition bias toward basic and acidic residues.

Belongs to the RimP family.

It localises to the cytoplasm. Required for maturation of 30S ribosomal subunits. The protein is Ribosome maturation factor RimP of Rhodopseudomonas palustris (strain BisA53).